Reading from the N-terminus, the 345-residue chain is Phosphoribosylformylglycinamidine cyclo-ligase (345 aa).

This sequence belongs to the AIR synthase family.

Its subcellular location is the cytoplasm. The enzyme catalyses 2-formamido-N(1)-(5-O-phospho-beta-D-ribosyl)acetamidine + ATP = 5-amino-1-(5-phospho-beta-D-ribosyl)imidazole + ADP + phosphate + H(+). It functions in the pathway purine metabolism; IMP biosynthesis via de novo pathway; 5-amino-1-(5-phospho-D-ribosyl)imidazole from N(2)-formyl-N(1)-(5-phospho-D-ribosyl)glycinamide: step 2/2. In Escherichia coli (strain 55989 / EAEC), this protein is Phosphoribosylformylglycinamidine cyclo-ligase.